Here is a 139-residue protein sequence, read N- to C-terminus: Transcription antitermination protein NusB (139 aa).

The protein belongs to the NusB family.

In terms of biological role, involved in transcription antitermination. Required for transcription of ribosomal RNA (rRNA) genes. Binds specifically to the boxA antiterminator sequence of the ribosomal RNA (rrn) operons. In Salmonella agona (strain SL483), this protein is Transcription antitermination protein NusB.